We begin with the raw amino-acid sequence, 122 residues long: MTKLSRKLQTQKRHRRLRRYLIGDATRPRLSVYRSNNHIYAQVIDDSAQTTICSASTVDKELKEKSEKLPSDCNSSSIVGKLLAKRAIKKGIKQVIFDRGGNLYHGRVKALADAAREAGLEF.

Belongs to the universal ribosomal protein uL18 family. As to quaternary structure, part of the 50S ribosomal subunit; part of the 5S rRNA/L5/L18/L25 subcomplex. Contacts the 5S and 23S rRNAs.

Its function is as follows. This is one of the proteins that bind and probably mediate the attachment of the 5S RNA into the large ribosomal subunit, where it forms part of the central protuberance. The polypeptide is Large ribosomal subunit protein uL18 (Prochlorococcus marinus (strain AS9601)).